Here is an 89-residue protein sequence, read N- to C-terminus: Small ribosomal subunit protein uS15 (89 aa).

It belongs to the universal ribosomal protein uS15 family. As to quaternary structure, part of the 30S ribosomal subunit. Forms a bridge to the 50S subunit in the 70S ribosome, contacting the 23S rRNA.

Functionally, one of the primary rRNA binding proteins, it binds directly to 16S rRNA where it helps nucleate assembly of the platform of the 30S subunit by binding and bridging several RNA helices of the 16S rRNA. Its function is as follows. Forms an intersubunit bridge (bridge B4) with the 23S rRNA of the 50S subunit in the ribosome. The protein is Small ribosomal subunit protein uS15 of Bartonella quintana (strain Toulouse) (Rochalimaea quintana).